The primary structure comprises 491 residues: Transmembrane protein 39B (491 aa).

Residues 1–56 (MAGGRRGANRTTYCRSPLSNDTGSVGNGNHSTSSPVTGVRSRTRNGSGTGMSSPPL) are disordered. N-linked (GlcNAc...) asparagine glycosylation is found at Asn9, Asn20, Asn29, and Asn45. Composition is skewed to polar residues over residues 9–36 (NRTT…SSPV) and 44–56 (RNGS…SPPL). A run of 8 helical transmembrane segments spans residues 79 to 99 (LFEL…YVNI), 115 to 135 (TSLN…IVLA), 152 to 172 (LSFP…TLAG), 185 to 205 (TYSV…IPFF), 290 to 310 (EVLV…VWFV), 322 to 342 (CELF…HLLP), 423 to 443 (ILNI…YSLM), and 449 to 469 (HQTI…FKLL).

The protein belongs to the TMEM39 family. Expressed in the ovary, followed by the intestine and brain.

The protein localises to the endoplasmic reticulum membrane. May protect the cells against DNA damage caused by exposure to the cold-warming stress and facilitates tissue damage repair during the recovery phase. This chain is Transmembrane protein 39B, found in Danio rerio (Zebrafish).